A 570-amino-acid polypeptide reads, in one-letter code: Developmental and secondary metabolism regulator veA (570 aa).

Disordered regions lie at residues 1 to 24 (MATRPPLMPPANETESSVSRISRE), 39 to 60 (ERARACGAGAKSSADRRPVDPP), 266 to 491 (DMYA…LGSG), and 504 to 541 (KRSHEETFGSDERPLHNGMRPDMDQYPSMGRKQPDYGR). Residues 25-231 (GKKITYKLSV…AEQGCRVRIR (207 aa)) form the Velvet domain. The Nuclear localization signal signature appears at 39–44 (ERARAC). Positions 278–287 (STSISTTADT) are enriched in polar residues. Over residues 315–335 (SMPAASAAPAPAPVHSPATSA) the composition is skewed to low complexity. 3 stretches are compositionally biased toward polar residues: residues 336–354 (QTSSYQSHLSFGATQSQYP), 363–395 (QSATPTNTYSPHPSYSHSRNPSNGTEYDATSSG), and 427–445 (NMQTSTDSRSSDANAYPTL). A PEST region spans residues 454–493 (PTPANHVTSLPPLKVLSGEYSHPSQPNAQSPHHDLGSGKR). Positions 505–526 (RSHEETFGSDERPLHNGMRPDM) are enriched in basic and acidic residues.

This sequence belongs to the velvet family. VeA subfamily. As to quaternary structure, component of the heterotrimeric velvet complex composed of laeA, veA and velB; VeA acting as a bridging protein between laeA and velB.

Its subcellular location is the nucleus. The protein resides in the cytoplasm. Functionally, component of the velvet transcription factor complex that controls sexual/asexual developmental ratio in response to light, promoting sexual development in the darkness while stimulating asexual sporulation under illumination. The velvet complex hat acts as a global regulator for secondary metabolite gene expression. Controls the expression of hundreds of genes, including those comprising more than a dozen known secondary metabolite gene clusters. Controls the expression of the gliotoxin gene cluster. Controls the expression of the fumagillin, fumitremorgin G, fumigaclavine C and glionitrin gene clusters. The regulation of the fumagillin gene cluster and fumagillin production is performed through direct control of the expression of fumR. Negatively regulates conidiation. Required for normal protease activity. This is Developmental and secondary metabolism regulator veA from Aspergillus fumigatus (strain ATCC MYA-4609 / CBS 101355 / FGSC A1100 / Af293) (Neosartorya fumigata).